A 634-amino-acid chain; its full sequence is Chaperone protein HtpG (634 aa).

Positions 1–345 are a; substrate-binding; it reads MEHQQNHTFS…SNDLPLNVSR (345 aa). The b stretch occupies residues 346–562; it reads EILQDTRVTA…NDDMSTQMAK (217 aa). Residues 563–634 form a c region; the sequence is LMAQMGQPVP…VGRINKLLLA (72 aa).

Belongs to the heat shock protein 90 family. In terms of assembly, homodimer.

The protein resides in the cytoplasm. Functionally, molecular chaperone. Has ATPase activity. This chain is Chaperone protein HtpG, found in Psychromonas ingrahamii (strain DSM 17664 / CCUG 51855 / 37).